Here is a 1346-residue protein sequence, read N- to C-terminus: Toll-like receptor Tollo (1346 aa).

The signal sequence occupies residues 1 to 21; that stretch reads MLATTHMLYVLIATCVIPIFG. The Extracellular segment spans residues 22–1021; it reads AALSKTVLYQ…NQPPKLDYIP (1000 aa). Residues asparagine 63, asparagine 112, and asparagine 126 are each glycosylated (N-linked (GlcNAc...) asparagine). LRR repeat units lie at residues 97-120, 124-146, 151-174, 176-198, 209-232, 234-256, 257-280, 282-304, 306-330, 331-354, 355-378, 380-402, 404-426, 427-450, 452-473, 474-497, 498-521, 523-544, 546-568, 570-591, 593-614, 615-637, and 638-661; these read LVEL…SFRG, LRNL…MASN, FRQL…MVCP, KSLQ…YFSA, GSTL…MLSA, GRLT…AFEG, LLSL…LFAE, KQLQ…IFGE, AELL…TFVG, LKRL…IFRP, LASL…IFAD, TNLH…TLQG, KNLL…SLVN, CSQL…LAHV, LLKT…SITQ, LESL…VFDR, MSSL…SLQR, SQLQ…LFTE, PNLV…HIPI, LQWL…EIES, LSLS…SSIP, NSVE…TFFK, and KPNL…ALRL. Residue asparagine 182 is glycosylated (N-linked (GlcNAc...) asparagine). The N-linked (GlcNAc...) asparagine glycan is linked to asparagine 291. Residue asparagine 426 is glycosylated (N-linked (GlcNAc...) asparagine). Residue asparagine 468 is glycosylated (N-linked (GlcNAc...) asparagine). Asparagine 505 carries N-linked (GlcNAc...) asparagine glycosylation. Asparagine 552 carries N-linked (GlcNAc...) asparagine glycosylation. A glycan (N-linked (GlcNAc...) asparagine) is linked at asparagine 640. 4 disulfide bridges follow: cysteine 682–cysteine 710, cysteine 684–cysteine 733, cysteine 757–cysteine 763, and cysteine 761–cysteine 776. 6 LRR repeats span residues 790-813, 814-837, 838-861, 863-885, 887-909, and 912-938; these read PMDS…AFIG, RKRL…TFYG, LLEL…EFQG, DNLQ…TFTH, YHLK…NFLP, and LNEL…YINR. Residues asparagine 823 and asparagine 832 are each glycosylated (N-linked (GlcNAc...) asparagine). Cysteine 924 and cysteine 950 are disulfide-bonded. Asparagine 956 and asparagine 1000 each carry an N-linked (GlcNAc...) asparagine glycan. A helical membrane pass occupies residues 1022 to 1042; the sequence is ILVAILTAFIFVMICISLVFI. At 1043-1346 the chain is on the cytoplasmic side; it reads FRQEMRVWCH…PTPASRNLHM (304 aa). One can recognise a TIR domain in the interval 1074 to 1209; it reads KLFDAFVSYS…LFWQKLRFAL (136 aa). The disordered stretch occupies residues 1235-1346; that stretch reads HHHHHVHQQA…PTPASRNLHM (112 aa). Low complexity predominate over residues 1267 to 1300; that stretch reads PGSFRRQPSLHQQQQQQQQIRGNNNTTQQQQQQQ.

This sequence belongs to the Toll-like receptor family. In terms of assembly, may interact (via the extracellular domain) with 18w (via the extracellular domain).

It is found in the cell membrane. The protein resides in the apical cell membrane. Functionally, toll-related receptor. Probably specific to larval innate immunity. Involved in the tracheal immune response of larvae to Gram-negative and perhaps Gram-positive bacteria; upon infection it negatively regulates the immune deficiency (Imd) signaling cascade specifically in the respiratory epithelium to prevent the overexpression of antimicrobial peptides (AMP). Involved in the NF-kappa-B-dependent apoptosis of unfit cells during cell competition. Involved in neuron-specific glycosylation. Positively controls the neuromuscular junction (NMJ) growth in presynaptic motorneurons, probably via the JNK pathway. During development of the peripheral nervous system, may function in the NF-kappa-B (rel) regulatory cascade to repress expression of the neuron-specific genes sc and ase in non-neuronal cells. Promotes heterophilic cell adhesion with 18w in vitro. May have a minor role in leg development. May be involved in determining the proximal cell fate in the wing, possibly by negatively regulating the Dpp signaling pathway. May also be involved in the Dpp signaling pathway in the eye. Possibly functions with 18w and Toll-6 during convergent extension, to help direct proper planar cell polarity, cell intercalation and axis elongation. In Drosophila melanogaster (Fruit fly), this protein is Toll-like receptor Tollo.